Here is a 445-residue protein sequence, read N- to C-terminus: C-terminal-binding protein 2 (445 aa).

Asymmetric dimethylarginine is present on R22. NAD(+) is bound by residues S106, 186-191, D210, 243-249, 270-272, and D296; these read IGFGRT, CNLNEHN, and AAR. The active site involves R272. The active site involves E301. The active-site Proton donor is the H321. NAD(+) is bound at residue 321-324; that stretch reads HTAW. A disordered region spans residues 414-445; that stretch reads THNLPTVAHPSQAPSPNQPTKHGDNREHPNEQ. S428 carries the phosphoserine modification. Residues 434 to 445 are compositionally biased toward basic and acidic residues; that stretch reads KHGDNREHPNEQ.

It belongs to the D-isomer specific 2-hydroxyacid dehydrogenase family. In terms of assembly, interacts with the C-terminus of adenovirus E1A protein. Can form homodimers or heterodimers of CTBP1 and CTBP2. Interacts with HIPK2. Interacts with ZNF217, PNN, NRIP1 and WIZ. Interacts with PRDM16; represses white adipose tissue (WAT)-specific genes expression. Interacts with MCRIP1. In terms of tissue distribution, isoform 2 is specifically localized in synaptic ribbon (at protein level).

It is found in the nucleus. The protein localises to the synapse. In terms of biological role, corepressor targeting diverse transcription regulators. Functions in brown adipose tissue (BAT) differentiation. Isoform 2 probably acts as a scaffold for specialized synapses. This Bos taurus (Bovine) protein is C-terminal-binding protein 2 (CTBP2).